The sequence spans 63 residues: 2-hydroxymuconate tautomerase (63 aa).

Proline 2 functions as the Proton acceptor; via imino nitrogen in the catalytic mechanism.

The protein belongs to the 4-oxalocrotonate tautomerase family. As to quaternary structure, homohexamer.

The catalysed reaction is (2Z,4E)-2-hydroxyhexa-2,4-dienedioate = (3E)-2-oxohex-3-enedioate. The protein operates within xenobiotic degradation; toluene degradation. Its pathway is xenobiotic degradation; xylene degradation. Functionally, catalyzes the ketonization of 2-hydroxymuconate stereoselectively to yield 2-oxo-3-hexenedioate. In Pseudomonas putida (Arthrobacter siderocapsulatus), this protein is 2-hydroxymuconate tautomerase (xylH).